Consider the following 185-residue polypeptide: MINEIRKDTEVRMEKCLEVFQNHISKIRTGRASPSILDGIQVEYYGTATPLRQLANIVVEDSRTLALTVFDRSLSAAVEKAIMTSDLGLNPSSAGTVIRVPLPALTEERRKDLIKVVRAEAEQGRVSIRNVRRDANEKVKALLKDKEISEDEDRRSQDDIQKLTDAFIKKVDAALAAKETELMDF.

It belongs to the RRF family.

It localises to the cytoplasm. Functionally, responsible for the release of ribosomes from messenger RNA at the termination of protein biosynthesis. May increase the efficiency of translation by recycling ribosomes from one round of translation to another. The chain is Ribosome-recycling factor from Yersinia enterocolitica serotype O:8 / biotype 1B (strain NCTC 13174 / 8081).